Consider the following 430-residue polypeptide: Adenylosuccinate synthetase (430 aa).

GTP is bound by residues 13–19 (GDEGKGK) and 41–43 (GHT). Residue aspartate 14 is the Proton acceptor of the active site. 2 residues coordinate Mg(2+): aspartate 14 and glycine 41. IMP contacts are provided by residues 14–17 (DEGK), 39–42 (NAGH), threonine 130, arginine 144, glutamine 225, threonine 240, and arginine 304. Catalysis depends on histidine 42, which acts as the Proton donor. 300–306 (ASTGRPR) provides a ligand contact to substrate. Residues arginine 306, 332–334 (KLD), and 414–416 (STG) each bind GTP.

It belongs to the adenylosuccinate synthetase family. Homodimer. The cofactor is Mg(2+).

The protein resides in the cytoplasm. It carries out the reaction IMP + L-aspartate + GTP = N(6)-(1,2-dicarboxyethyl)-AMP + GDP + phosphate + 2 H(+). The protein operates within purine metabolism; AMP biosynthesis via de novo pathway; AMP from IMP: step 1/2. Its function is as follows. Plays an important role in the de novo pathway of purine nucleotide biosynthesis. Catalyzes the first committed step in the biosynthesis of AMP from IMP. This is Adenylosuccinate synthetase from Stenotrophomonas maltophilia (strain R551-3).